The sequence spans 339 residues: D-glycero-alpha-D-manno-heptose 7-phosphate kinase (339 aa).

17-20 (GGTD) provides a ligand contact to substrate. ATP is bound by residues Ser-57 and 110 to 116 (GSGLGGS). 2 residues coordinate Mg(2+): Ser-116 and Glu-148. Asp-160 functions as the Proton acceptor in the catalytic mechanism.

The protein belongs to the GHMP kinase family.

It catalyses the reaction D-glycero-alpha-D-manno-heptose 7-phosphate + ATP = D-glycero-alpha-D-manno-heptose 1,7-bisphosphate + ADP + H(+). Its pathway is nucleotide-sugar biosynthesis; GDP-D-glycero-alpha-D-manno-heptose biosynthesis; GDP-D-glycero-alpha-D-manno-heptose from D-glycero-alpha-D-manno-heptose 7-phosphate: step 1/3. It functions in the pathway capsule biogenesis; capsule polysaccharide biosynthesis. Catalyzes the phosphorylation of D-glycero-alpha-D-manno-heptose 7-phosphate at the C-1 position to form D-glycero-alpha-D-manno-heptose 1,7-bisphosphate. The polypeptide is D-glycero-alpha-D-manno-heptose 7-phosphate kinase (Campylobacter jejuni subsp. jejuni serotype O:2 (strain ATCC 700819 / NCTC 11168)).